The sequence spans 354 residues: UPF0421 protein BH2644 (354 aa).

4 consecutive transmembrane segments (helical) span residues alanine 22–isoleucine 42, leucine 60–phenylalanine 80, threonine 107–alanine 127, and valine 133–proline 153.

It belongs to the UPF0421 family.

Its subcellular location is the cell membrane. This is UPF0421 protein BH2644 from Halalkalibacterium halodurans (strain ATCC BAA-125 / DSM 18197 / FERM 7344 / JCM 9153 / C-125) (Bacillus halodurans).